The following is a 327-amino-acid chain: MEAIKGSDVNVPDAVFAWMLDGRGGVKPLENTDVIDEAHPCWLHLNYVHHDSAQWLATTPLLPNNVRDALAGESTRPRVSRLGEGTLITLRCINGSTDERPDQLVAMRVYMDGRLIVSTRQRKVLALDDVVSDLEEGTGPTDCGGWLVDVCDALTDHSSEFIEQLHDKIIDLEDNLLDQQIPPRGFLALLRKQLIVMRRYMAPQRDVYARLASERMPWMSDDQRRRMQDIADRLGRGLDEIDACIARTGVMADEIAQVMQENLARRTYTMSLMAMVFLPSTFLTGLFGVNLGGIPGGGWQFGFSIFCILLVVLIGGVALWLHRSKWL.

Topologically, residues 1 to 273 are cytoplasmic; that stretch reads MEAIKGSDVN…ARRTYTMSLM (273 aa). A helical transmembrane segment spans residues 274 to 294; it reads AMVFLPSTFLTGLFGVNLGGI. Residues 295 to 300 lie on the Periplasmic side of the membrane; it reads PGGGWQ. Residues 301–321 form a helical membrane-spanning segment; that stretch reads FGFSIFCILLVVLIGGVALWL. Over 322-327 the chain is Cytoplasmic; it reads HRSKWL.

The protein belongs to the CorA metal ion transporter (MIT) (TC 1.A.35) family.

It localises to the cell inner membrane. The catalysed reaction is Zn(2+)(out) + H(+)(out) = Zn(2+)(in) + H(+)(in). Functionally, zinc transporter. Acts as a Zn(2+):proton symporter, which likely mediates zinc ion uptake. The polypeptide is Zinc transport protein ZntB (Escherichia coli O6:K15:H31 (strain 536 / UPEC)).